Consider the following 212-residue polypeptide: Elongation factor Ts (212 aa).

The interval 82–85 (SDFV) is involved in Mg(2+) ion dislocation from EF-Tu.

It belongs to the EF-Ts family.

It localises to the cytoplasm. Associates with the EF-Tu.GDP complex and induces the exchange of GDP to GTP. It remains bound to the aminoacyl-tRNA.EF-Tu.GTP complex up to the GTP hydrolysis stage on the ribosome. The protein is Elongation factor Ts of Solibacter usitatus (strain Ellin6076).